A 1092-amino-acid chain; its full sequence is DNA polymerase II large subunit (1092 aa).

Belongs to the archaeal DNA polymerase II family. In terms of assembly, heterodimer of a large subunit and a small subunit.

The enzyme catalyses DNA(n) + a 2'-deoxyribonucleoside 5'-triphosphate = DNA(n+1) + diphosphate. The catalysed reaction is Exonucleolytic cleavage in the 3'- to 5'-direction to yield nucleoside 5'-phosphates.. In terms of biological role, possesses two activities: a DNA synthesis (polymerase) and an exonucleolytic activity that degrades single-stranded DNA in the 3'- to 5'-direction. Has a template-primer preference which is characteristic of a replicative DNA polymerase. The chain is DNA polymerase II large subunit (polC) from Methanothermobacter thermautotrophicus (strain ATCC 29096 / DSM 1053 / JCM 10044 / NBRC 100330 / Delta H) (Methanobacterium thermoautotrophicum).